The sequence spans 185 residues: Elongation factor P 1 (185 aa).

Belongs to the elongation factor P family.

Its subcellular location is the cytoplasm. It participates in protein biosynthesis; polypeptide chain elongation. In terms of biological role, involved in peptide bond synthesis. Stimulates efficient translation and peptide-bond synthesis on native or reconstituted 70S ribosomes in vitro. Probably functions indirectly by altering the affinity of the ribosome for aminoacyl-tRNA, thus increasing their reactivity as acceptors for peptidyl transferase. This is Elongation factor P 1 (efp1) from Chlamydia pneumoniae (Chlamydophila pneumoniae).